Here is a 490-residue protein sequence, read N- to C-terminus: Secretory immunoglobulin A-binding protein EsiB (490 aa).

The signal sequence occupies residues 1-23 (MKKSLLAVMLTGLFALVSLPALG). Sel1-like repeat units follow at residues 39–74 (AKAQLELGYRYFQGNETTKDLTQAMDWFRRAAEQGY), 77–109 (AEYVLGLRYMNGEGVPQDYAQAVIWYKKAALKG), 111–145 (PQAQQNLGVMYHEGNGVKVDKAESVKWFRLAAEQG), 153–182 (MGDAYFEGDGVTRDYVMAREWYSKAAEQGN), 185–218 (SCNQLGYMYSRGLGVERNDAISAQWYRKSATSGD), 222–254 (QLHLADMYYFGIGVTQDYTQSRVLFSQSAEQGN), 256–290 (IAQFRLGYILEQGLAGAKEPLKALEWYRKSAEQGN), 291–327 (SDGQYYLAHLYDKGAEGVAKNREQAISWYTKSAEQGD), 328–361 (ATAQANLGAIYFRLGSEEEHKKAVEWFRKAAAKG), 364–397 (AAQFNLGNALLQGKGVKKDEQQAAIWMRKAAEQG), and 399–430 (SAAQVQLGEIYYYGLGVERDYVQAWAWFDTAS). Mg(2+) is bound by residues His-122, Glu-159, and Asp-161.

As to quaternary structure, interacts with human secreted IgA (SIgA) at least via resides 244-260. It depends on Mg(2+) as a cofactor.

Its subcellular location is the cell surface. In terms of biological role, upon host (human neutrophil) infection interferes with productive FCAR signaling, inhibiting secreted IgA (SIgA) effector functions and probably avoiding neutrophil activation. Inhibits the SIgA-mediated oxidative burst by neutrophils, decreases generation of ROS (reactive oxygen species) by neutrophils and reduces chemotaxis by neutrophils, all of which are SIgA effector functions used to stimulate the immune response. Does not block SIgA-binding to its receptor (FCAR) on neutrophils, but it decreases SIgA-stimulated phosphorylation of cytoplasmic proteins, including phospholipase C-gamma and MAP kinases, all actions that may be advantageous to the pathogen. In Escherichia coli O6:H1 (strain CFT073 / ATCC 700928 / UPEC), this protein is Secretory immunoglobulin A-binding protein EsiB.